Here is a 428-residue protein sequence, read N- to C-terminus: Serine--tRNA ligase (428 aa).

An L-serine-binding site is contributed by 231-233; that stretch reads TAE. Residue 262–264 participates in ATP binding; the sequence is RAE. Glutamate 285 contributes to the L-serine binding site. 349–352 lines the ATP pocket; the sequence is EISS. Serine 385 is a binding site for L-serine.

The protein belongs to the class-II aminoacyl-tRNA synthetase family. Type-1 seryl-tRNA synthetase subfamily. In terms of assembly, homodimer. The tRNA molecule binds across the dimer.

The protein resides in the cytoplasm. The catalysed reaction is tRNA(Ser) + L-serine + ATP = L-seryl-tRNA(Ser) + AMP + diphosphate + H(+). The enzyme catalyses tRNA(Sec) + L-serine + ATP = L-seryl-tRNA(Sec) + AMP + diphosphate + H(+). It participates in aminoacyl-tRNA biosynthesis; selenocysteinyl-tRNA(Sec) biosynthesis; L-seryl-tRNA(Sec) from L-serine and tRNA(Sec): step 1/1. Catalyzes the attachment of serine to tRNA(Ser). Is also able to aminoacylate tRNA(Sec) with serine, to form the misacylated tRNA L-seryl-tRNA(Sec), which will be further converted into selenocysteinyl-tRNA(Sec). The protein is Serine--tRNA ligase of Methylorubrum extorquens (strain CM4 / NCIMB 13688) (Methylobacterium extorquens).